Here is a 153-residue protein sequence, read N- to C-terminus: ADKAASGVLTKLPQKQIQEMKEAFSMIDVDRDGFVSKDDIKAISEQLGRTPDDKELTAMLKEAPGPLNFTMFLSDKLSGTDSEETIRNAFAMFDEQENKKLNIEYIKDLLEDMGNNFNKDEMRMTFKEAPVEGGKFDYVKFTAMIKGSGEDEA.

Ala1 carries the post-translational modification Blocked amino end (Ala). 2 consecutive EF-hand domains span residues 15–50 and 81–116; these read KQIQEMKEAFSMIDVDRDGFVSKDDIKAISEQLGRT and DSEETIRNAFAMFDEQENKKLNIEYIKDLLEDMGNN. The Ca(2+) site is built by Asp28, Asp30, Asp32, and Asp39.

Functionally, in molluscan muscle, calcium regulation is associated with myosin rather than with actin. Muscle myosin contains two types of light chains: the catalytic light chain, essential for ATPase activity, and the regulatory light chain, a calcium-binding protein responsible for Ca(2+) dependent binding and Ca(2+) dependent Mg-ATPase activity. This chain is Myosin regulatory light chain, found in Patinopecten sp. (Scallop).